A 382-amino-acid polypeptide reads, in one-letter code: Flap endonuclease 1 (382 aa).

The segment at 1–104 (MGILGLSKLI…GELAKRAERR (104 aa)) is N-domain. Position 34 (Asp-34) interacts with Mg(2+). Arg-47 and Arg-70 together coordinate DNA. Residue Asp-86 participates in Mg(2+) binding. Positions 95–118 (GELAKRAERREDAQKALEKATEAG) are disordered. Over residues 96 to 115 (ELAKRAERREDAQKALEKAT) the composition is skewed to basic and acidic residues. The tract at residues 122-253 (DMDKFNRRLV…KRATELMNSY (132 aa)) is I-domain. Mg(2+)-binding residues include Glu-158, Glu-160, Asp-179, and Asp-181. Glu-158 lines the DNA pocket. Positions 231 and 233 each coordinate DNA. Asp-233 is a Mg(2+) binding site. The interval 336–344 (TQGRLDSFF) is interaction with PCNA. The tract at residues 353-382 (TTPKRKADDKNNVQQKKSKTAGNTKGKRPK) is disordered. Residues 364 to 375 (NVQQKKSKTAGN) show a composition bias toward polar residues.

It belongs to the XPG/RAD2 endonuclease family. FEN1 subfamily. As to quaternary structure, interacts with PCNA. Three molecules of FEN1 bind to one PCNA trimer with each molecule binding to one PCNA monomer. PCNA stimulates the nuclease activity without altering cleavage specificity. Requires Mg(2+) as cofactor. In terms of processing, phosphorylated. Phosphorylation upon DNA damage induces relocalization to the nuclear plasma.

It is found in the nucleus. The protein localises to the nucleolus. It localises to the nucleoplasm. Its subcellular location is the mitochondrion. In terms of biological role, structure-specific nuclease with 5'-flap endonuclease and 5'-3' exonuclease activities involved in DNA replication and repair. During DNA replication, cleaves the 5'-overhanging flap structure that is generated by displacement synthesis when DNA polymerase encounters the 5'-end of a downstream Okazaki fragment. It enters the flap from the 5'-end and then tracks to cleave the flap base, leaving a nick for ligation. Also involved in the long patch base excision repair (LP-BER) pathway, by cleaving within the apurinic/apyrimidinic (AP) site-terminated flap. Acts as a genome stabilization factor that prevents flaps from equilibrating into structures that lead to duplications and deletions. Also possesses 5'-3' exonuclease activity on nicked or gapped double-stranded DNA, and exhibits RNase H activity. Also involved in replication and repair of rDNA and in repairing mitochondrial DNA. The sequence is that of Flap endonuclease 1 from Glossina morsitans morsitans (Savannah tsetse fly).